The sequence spans 97 residues: Large ribosomal subunit protein bL28 (97 aa).

The protein belongs to the bacterial ribosomal protein bL28 family.

In Brucella ovis (strain ATCC 25840 / 63/290 / NCTC 10512), this protein is Large ribosomal subunit protein bL28.